Reading from the N-terminus, the 223-residue chain is Small ribosomal subunit protein uS5 (223 aa).

The segment at 1 to 48 (MPGRQRRDGGSGPAGQNGPNSGDNSNARGDNRGGGRDRRDGGRGGNAA) is disordered. A compositionally biased stretch (basic and acidic residues) spans 29–42 (GDNRGGGRDRRDGG). Residues 53–116 (FIERVVTINR…EEARKSFFRV (64 aa)) enclose the S5 DRBM domain.

This sequence belongs to the universal ribosomal protein uS5 family. In terms of assembly, part of the 30S ribosomal subunit. Contacts proteins S4 and S8.

Its function is as follows. With S4 and S12 plays an important role in translational accuracy. Located at the back of the 30S subunit body where it stabilizes the conformation of the head with respect to the body. In Rhodococcus erythropolis (strain PR4 / NBRC 100887), this protein is Small ribosomal subunit protein uS5.